Reading from the N-terminus, the 426-residue chain is Probable imidazolonepropionase (426 aa).

Positions 158 and 192 each coordinate 4-imidazolone-5-propanoate. Tyr-158 provides a ligand contact to N-formimidoyl-L-glutamate. Residue His-260 participates in Fe(3+) binding. Position 260 (His-260) interacts with Zn(2+). Residue Glu-263 coordinates 4-imidazolone-5-propanoate. Residue Asp-334 coordinates Fe(3+). A Zn(2+)-binding site is contributed by Asp-334. Asn-336 is an N-formimidoyl-L-glutamate binding site.

Belongs to the metallo-dependent hydrolases superfamily. HutI family. Zn(2+) is required as a cofactor. Requires Fe(3+) as cofactor.

The catalysed reaction is 4-imidazolone-5-propanoate + H2O = N-formimidoyl-L-glutamate. It participates in amino-acid degradation; L-histidine degradation into L-glutamate; N-formimidoyl-L-glutamate from L-histidine: step 3/3. This Dictyostelium discoideum (Social amoeba) protein is Probable imidazolonepropionase (amdhd1).